A 242-amino-acid chain; its full sequence is Small ribosomal subunit protein eS4 (242 aa).

In terms of domain architecture, S4 RNA-binding spans 43–106 (LPLMIIVRDI…GDVYRVLPDE (64 aa)).

Belongs to the eukaryotic ribosomal protein eS4 family.

This chain is Small ribosomal subunit protein eS4 (rps4e), found in Methanothermobacter thermautotrophicus (strain ATCC 29096 / DSM 1053 / JCM 10044 / NBRC 100330 / Delta H) (Methanobacterium thermoautotrophicum).